We begin with the raw amino-acid sequence, 208 residues long: ATP phosphoribosyltransferase (208 aa).

The protein belongs to the ATP phosphoribosyltransferase family. Short subfamily. As to quaternary structure, heteromultimer composed of HisG and HisZ subunits.

Its subcellular location is the cytoplasm. It catalyses the reaction 1-(5-phospho-beta-D-ribosyl)-ATP + diphosphate = 5-phospho-alpha-D-ribose 1-diphosphate + ATP. Its pathway is amino-acid biosynthesis; L-histidine biosynthesis; L-histidine from 5-phospho-alpha-D-ribose 1-diphosphate: step 1/9. In terms of biological role, catalyzes the condensation of ATP and 5-phosphoribose 1-diphosphate to form N'-(5'-phosphoribosyl)-ATP (PR-ATP). Has a crucial role in the pathway because the rate of histidine biosynthesis seems to be controlled primarily by regulation of HisG enzymatic activity. The chain is ATP phosphoribosyltransferase from Lactococcus lactis subsp. cremoris (strain MG1363).